The primary structure comprises 1346 residues: Adhesion G protein-coupled receptor F5 (1346 aa).

An N-terminal signal peptide occupies residues 1–21 (MKSPRRTTLCLMFIVIYSSKA). The Extracellular segment spans residues 22-1006 (ALNWNYESTI…MSPDSPDPSS (985 aa)). N-linked (GlcNAc...) asparagine glycosylation is found at Asn-73, Asn-94, Asn-106, Asn-188, Asn-256, Asn-272, Asn-301, Asn-315, Asn-328, Asn-398, Asn-472, Asn-487, Asn-505, Asn-540, Asn-627, Asn-649, Asn-666, Asn-820, Asn-931, Asn-963, and Asn-982. The SEA domain occupies 166–273 (LQEDVTLNMR…NSFQAVTINE (108 aa)). Ig-like domains follow at residues 267-368 (QAVT…IDVM), 369-466 (PIQI…IKVT), and 471-561 (ANLT…KDVI). 2 disulfides stabilise this stretch: Cys-293–Cys-350 and Cys-391–Cys-449. Cys-492 and Cys-545 are joined by a disulfide. One can recognise a GAIN-B domain in the interval 842 to 1003 (PPLSFSQTNV…SILMSPDSPD (162 aa)). Intrachain disulfides connect Cys-954/Cys-985 and Cys-973/Cys-987. Residues 954–1003 (CVFWNFRLANNTGGWDSSGCYVEEGDGDNVTCICDHLTSFSILMSPDSPD) are GPS. Residues 991–1006 (TSFSILMSPDSPDPSS) are tethered agonist. A helical transmembrane segment spans residues 1007–1027 (LLGILLDIISYVGVGFSILSL). Residues 1028-1053 (AACLVVEAVVWKSVTKNRTSYMRHTC) are Cytoplasmic-facing. Residues 1054–1074 (IVNIAASLLVANTWFIVVAAI) form a helical membrane-spanning segment. The Extracellular portion of the chain corresponds to 1075–1090 (QDNRYILCKTACVAAT). A helical transmembrane segment spans residues 1091–1111 (FFIHFFYLSVFFWMLTLGLML). At 1112–1128 (FYRLVFILHETSRSTQK) the chain is on the cytoplasmic side. Residues 1129-1149 (AIAFCLGYGCPLAISVITLGA) traverse the membrane as a helical segment. Topologically, residues 1150–1173 (TQPREVYTRKNVCWLNWEDTKALL) are extracellular. Residues 1174–1194 (AFAIPALIIVVVNITITIVVI) form a helical membrane-spanning segment. The Cytoplasmic portion of the chain corresponds to 1195–1220 (TKILRPSIGDKPCKQEKSSLFQISKS). A helical membrane pass occupies residues 1221-1241 (IGVLTPLLGLTWGFGLTTVFP). Topologically, residues 1242–1244 (GTN) are extracellular. The chain crosses the membrane as a helical span at residues 1245–1265 (LVFHIIFAILNVFQGLFILLF). Residues 1266–1346 (GCLWDLKVQE…NSSSASSLLN (81 aa)) lie on the Cytoplasmic side of the membrane. A Phosphothreonine modification is found at Thr-1300. Ser-1307 carries the phosphoserine modification. The disordered stretch occupies residues 1327-1346 (TPEATSSSLENSSSASSLLN). Positions 1329 to 1346 (EATSSSLENSSSASSLLN) are enriched in low complexity.

This sequence belongs to the G-protein coupled receptor 2 family. Adhesion G-protein coupled receptor (ADGR) subfamily. Homodimer; disulfide-linked. Heterodimer of 2 chains generated by proteolytic processing; the large extracellular N-terminal fragment and the membrane-bound C-terminal fragment predominantly remain associated and non-covalently linked. Fragment generates by the processing enzyme furin remains attached to the extracellular N-terminal fragment. Interacts (via N-terminal extracellular domain) with SFTPD. Post-translationally, highly glycosylated. Proteolytically cleaved at multiple sites: one in the GPS region of the GAIN-B domain (S1 site) and the other in the SEA domain (S2 site). The proteolytic cleavage at S1 site generates an extracellular subunit and a seven-transmembrane subunit. The proteolytic cleavage at S2 site generates a fragment that undergoes proteolytic cleavage by the processing enzyme furin. In terms of tissue distribution, expressed in lung endothelial cells and in alveolar type II (ATII) cells (at protein level). Expressed high levels in subcutaneous adipose tissue in lean individuals and at lower levels in visceral fat. Expression levels in subcutaneous adipose tissue drastically drop in obese individuals.

The protein resides in the cell membrane. Its activity is regulated as follows. As an adhesion G protein-coupled receptor (aGPCR) exhibits a large N-terminal extracellular domain containing highly conserved GPCR autoproteolysis-inducing (GAIN) domain. During synthesis, intracellular autoproteolytic processing of nascent chain within the GAIN domain generates a mature protein, consisting of an N-terminal fragment that is non-covalently linked to the C-terminal fragment. The mature protein is routed to the plasma membrane where the N- and C-terminal fragments remain associated, forming the holoreceptor. Dissociation of the aGPCR fragments stimulates G protein signaling through the action of the tethered-peptide agonist stalk that is occluded within the GAIN domain in the holoreceptor form. This dissociation might be induced by ligand binding, such as that of sFNDC4. Adhesion G protein-coupled receptor. In alveolar type II (ATII or AT2) cells, required for normal lung surfactant homeostasis. Modulation of both surfactant secretion and uptake by ATII cells is mediated by the downstream activation of GNAQ/GNA11 proteins and may be a consequence of increased cortical F-actin assembly induced by ADGRF5 activation. In the kidney, may play a role in the regulation of acid excretion into the primary urine, possibly by regulating the surface expression of V-ATPase proton pump. As a receptor for soluble FNDC4 (sFNDC4), required for proper systemic glucose tolerance, specifically sensitizing white adipose tissue to insulin. Also plays a role in sFNDC4-induced decrease of local inflammation in white adipose tissue. The sequence is that of Adhesion G protein-coupled receptor F5 from Homo sapiens (Human).